A 20-amino-acid polypeptide reads, in one-letter code: Tetracycline resistance leader peptide (20 aa).

The sequence is that of Tetracycline resistance leader peptide (tetL) from Bacillus cereus.